Here is a 288-residue protein sequence, read N- to C-terminus: Prohibitin-2 (288 aa).

A helical; Signal-anchor for type II membrane protein transmembrane segment spans residues 21–43 (GKYAFTGTGLLLALGLAGFAVQT). Positions 125–128 (YRTL) match the AIM motif.

It belongs to the prohibitin family. In terms of assembly, the mitochondrial prohibitin complex consists of two subunits (phb1 and phb2). The subunits assemble into a membrane-associated ring-shaped supercomplex of approximately 1 mDa.

It is found in the mitochondrion inner membrane. Its function is as follows. Prohibitin probably acts as a holdase/unfoldase for the stabilization of newly synthesized mitochondrial proteins. Involved in mitophagy; may act as an adapter for atg8 that supports mitophagosome assembly. Negatively regulates the proteolytic processing of atg32 via the i-AAA protease. Acts as a negative regulator of the m-AAA protease. The chain is Prohibitin-2 (phb2) from Schizosaccharomyces pombe (strain 972 / ATCC 24843) (Fission yeast).